Consider the following 130-residue polypeptide: Fumarate reductase subunit C (130 aa).

3 helical membrane-spanning segments follow: residues 30–50 (EGTSIPAVWFSVLLIYGVFSL), 60–80 (FVSFLQNPLVLFLNILTLFAA), and 110–130 (IKALWVVTVVASAIILAVALL).

This sequence belongs to the FrdC family. In terms of assembly, part of an enzyme complex containing four subunits: a flavoprotein (FrdA), an iron-sulfur protein (FrdB), and two hydrophobic anchor proteins (FrdC and FrdD).

The protein localises to the cell inner membrane. Its function is as follows. Two distinct, membrane-bound, FAD-containing enzymes are responsible for the catalysis of fumarate and succinate interconversion; fumarate reductase is used in anaerobic growth, and succinate dehydrogenase is used in aerobic growth. Anchors the catalytic components of the fumarate reductase complex to the cell inner membrane, binds quinones. This is Fumarate reductase subunit C from Yersinia pestis bv. Antiqua (strain Angola).